The following is a 768-amino-acid chain: Tripartite motif-containing protein 67 (768 aa).

Residues 7–42 form an RING-type; degenerate zinc finger; it reads CPVCGSLFREPIILPCSHNVCLPCARTIAVQTPDGE. Positions 55 to 70 are enriched in low complexity; sequence AAAAATPPDQDAAAGA. Disordered stretches follow at residues 55-74 and 247-284; these read AAAA…TSGG and QPPP…ASAP. The segment at 201 to 248 adopts a B box-type 1; degenerate zinc-finger fold; that stretch reads AICQLCDRTPPEPAATLCEQCDVLYCATCQLKCHPSRGPFAKHRLVQP. The span at 247 to 257 shows a compositional bias: pro residues; the sequence is QPPPPPTPPEA. A B box-type 2 zinc finger spans residues 285–327; the sequence is RKFPTCPEHEMENYSMYCVSCRSPVCYMCLEEGRHSKHEVKPL. 4 residues coordinate Zn(2+): C290, H293, C313, and H319. Positions 332–369 form a coiled coil; sequence KQHKAQLSQALNGVSDKAKEAKEFLVQLKNILQQIQEN. The 59-residue stretch at 435-493 folds into the COS domain; it reads IKEDDPSGFLQISDALIKRVQTSQEQWVKGALEPKVSAEFDLTLDSEPLLQAIHQLDFV. The Fibronectin type-III domain occupies 498 to 592; the sequence is PPVPLLQLEK…KTVVLQTSDV (95 aa). In terms of domain architecture, B30.2/SPRY spans 574–765; the sequence is NSSGVGPYSK…VPTNLGRPKL (192 aa).

The protein resides in the cytoplasm. Its subcellular location is the cytoskeleton. This chain is Tripartite motif-containing protein 67 (Trim67), found in Mus musculus (Mouse).